A 476-amino-acid polypeptide reads, in one-letter code: GTPase Der (476 aa).

2 EngA-type G domains span residues 3–167 (FTVA…GEER) and 205–380 (LRVA…KVWN). Residues 9–16 (GRPNVGKS), 56–60 (DTAGL), 119–122 (NKSE), 211–218 (GRPNAGKS), 258–262 (DTAGM), and 323–326 (NKWD) each bind GTP. The region spanning 381-465 (RRISTARLNR…PIRVHFRASE (85 aa)) is the KH-like domain.

Belongs to the TRAFAC class TrmE-Era-EngA-EngB-Septin-like GTPase superfamily. EngA (Der) GTPase family. As to quaternary structure, associates with the 50S ribosomal subunit.

Its function is as follows. GTPase that plays an essential role in the late steps of ribosome biogenesis. This is GTPase Der from Rhizobium meliloti (strain 1021) (Ensifer meliloti).